We begin with the raw amino-acid sequence, 125 residues long: Cytochrome c-556 (125 aa).

Positions 13, 113, 116, and 117 each coordinate heme. Heme c-binding residues include Met13, Cys113, Cys116, and His117.

Monomer. Post-translationally, binds 1 heme c group covalently per subunit.

Low-spin monoheme cytochrome c. The protein is Cytochrome c-556 of Agrobacterium tumefaciens (strain apple 185).